The following is a 347-amino-acid chain: MSGLLCYCRQGFEPELAAELSARAAFVGIAGYARTQRNDGYVLFVCDEAAQLAAKLQWRELIFARQKLVVIAELKGIDPKDRITPILAALEGQQRFGDLWVEHPDSDAGKPLASLARSFGNALRPALRKAGLLTDKPQPRQPRLHICFLDGDHALLAVADSADSAPWPLGIPRLKLLPEAPSRSALKLDEALLTLLTPEEREALVKPGMRAADLGAAPGGWTWVLTRQHVHVTSVDNGPLRAHVLETGLVEHLRADGFHWKPAQPLDWMVCDMVEQPRRVAERMATWVREGWCRNTIFNLKLPMKKRWDETRLCLELFEQQAEKSLIVRAKQLYHDREEITVLAMRG.

S-adenosyl-L-methionine contacts are provided by residues S184, 217 to 220 (APGG), D236, D256, and D272. The Proton acceptor role is filled by K301.

Belongs to the class I-like SAM-binding methyltransferase superfamily. RNA methyltransferase RlmE family. RlmM subfamily. As to quaternary structure, monomer.

It is found in the cytoplasm. It catalyses the reaction cytidine(2498) in 23S rRNA + S-adenosyl-L-methionine = 2'-O-methylcytidine(2498) in 23S rRNA + S-adenosyl-L-homocysteine + H(+). Catalyzes the 2'-O-methylation at nucleotide C2498 in 23S rRNA. The chain is Ribosomal RNA large subunit methyltransferase M from Xanthomonas oryzae pv. oryzae (strain MAFF 311018).